The sequence spans 307 residues: Putative flagellar export/assembly protein LafU (307 aa).

Residues 32–54 form a helical membrane-spanning segment; the sequence is AWKVAFADFTLAMMALFMTLWIV. Residues 87–108 form a disordered region; it reads SPSHPPKPATVAAPEETEKKAR. Residues 154–272 form the OmpA-like domain; sequence LRVLIKDDQN…RIEIMVLTKS (119 aa).

The protein belongs to the MotB family.

The protein localises to the cell inner membrane. Functionally, part of the flagellar gene cluster Flag-2. However, the Flag-2 flagellar system could be inactive in strain 042 due to a frameshift in lfgC. The protein is Putative flagellar export/assembly protein LafU of Escherichia coli O44:H18 (strain 042 / EAEC).